The primary structure comprises 418 residues: Putative F-box protein At1g20795 (418 aa).

An F-box domain is found at 1–46; that stretch reads METLGLPLPLFEKILFRLDPISLVMMKCTRRSFNSHISEDPYFKSK.

This chain is Putative F-box protein At1g20795, found in Arabidopsis thaliana (Mouse-ear cress).